A 79-amino-acid chain; its full sequence is Antimicrobial peptide UyCT1 (79 aa).

Positions 1–23 (MKTQLAFLAITVILMQLFAQTEA) are cleaved as a signal peptide. Ile37 carries the isoleucine amide modification. Residues 41–79 (GLRNVDQIADLFDSGLSDADDLFDSGLSDADAKFMKMFM) constitute a propeptide that is removed on maturation.

It belongs to the non-disulfide-bridged peptide (NDBP) superfamily. Short antimicrobial peptide (group 4) family. In terms of tissue distribution, expressed by the venom gland.

Its subcellular location is the secreted. The protein resides in the target cell membrane. In terms of biological role, inhibits the growth of Gram-positive (S.aureus, MIC=15 uM) and Gram-negative bacteria (E.coli, MIC=10 uM and P.aeruginosa, MIC=10 uM). It also shows 26% of hemolysis when 15 uM are tested (81% at 50 uM). Its function is as follows. Inhibits the growth of Gram-negative bacteria (E.coli, MIC=25 uM and P.aeruginosa, MIC=40 uM). It also shows 7% of hemolysis when 50 uM are tested. Does not show activity against the Gram-positive bacteria S.aureus. The sequence is that of Antimicrobial peptide UyCT1 from Urodacus yaschenkoi (Inland robust scorpion).